The chain runs to 236 residues: Small ribosomal subunit protein uS2c (236 aa).

This sequence belongs to the universal ribosomal protein uS2 family.

The protein resides in the plastid. It is found in the chloroplast. The protein is Small ribosomal subunit protein uS2c (rps2) of Gossypium barbadense (Sea Island cotton).